Here is a 418-residue protein sequence, read N- to C-terminus: Light-independent protochlorophyllide reductase subunit N (418 aa).

Residues Cys-17, Cys-42, and Cys-103 each contribute to the [4Fe-4S] cluster site.

This sequence belongs to the BchN/ChlN family. Protochlorophyllide reductase is composed of three subunits; ChlL, ChlN and ChlB. Forms a heterotetramer of two ChlB and two ChlN subunits. It depends on [4Fe-4S] cluster as a cofactor.

The enzyme catalyses chlorophyllide a + oxidized 2[4Fe-4S]-[ferredoxin] + 2 ADP + 2 phosphate = protochlorophyllide a + reduced 2[4Fe-4S]-[ferredoxin] + 2 ATP + 2 H2O. It functions in the pathway porphyrin-containing compound metabolism; chlorophyll biosynthesis (light-independent). Functionally, component of the dark-operative protochlorophyllide reductase (DPOR) that uses Mg-ATP and reduced ferredoxin to reduce ring D of protochlorophyllide (Pchlide) to form chlorophyllide a (Chlide). This reaction is light-independent. The NB-protein (ChlN-ChlB) is the catalytic component of the complex. The sequence is that of Light-independent protochlorophyllide reductase subunit N from Prochlorococcus marinus (strain MIT 9312).